We begin with the raw amino-acid sequence, 551 residues long: Sodium-dependent high-affinity dicarboxylate transporter 2 (551 aa).

10 helical membrane passes run 9-29, 34-54, 82-102, 119-139, 194-214, 243-263, 347-367, 417-437, 449-469, and 497-517; these read LIKK…LFFG, CLFS…PIGV, SIVL…TGLH, VMLL…SDTA, FCKA…TAII, WMVF…IILV, VSGV…FDPI, IFVG…IVIM, IFIP…LYLA, and VISM…CILI.

The protein belongs to the SLC13A/DASS transporter (TC 2.A.47) family. NADC subfamily.

Its subcellular location is the membrane. Functionally, high-affinity sodium-dicarboxylate cotransporter that accepts a range of tricarboxylic acid-cycle intermediates with 4-5 carbon atoms. There is no interaction with monocarboxylates. This is Sodium-dependent high-affinity dicarboxylate transporter 2 (nac-2) from Caenorhabditis elegans.